Consider the following 134-residue polypeptide: ATP synthase epsilon chain, chloroplastic (134 aa).

Belongs to the ATPase epsilon chain family. In terms of assembly, F-type ATPases have 2 components, CF(1) - the catalytic core - and CF(0) - the membrane proton channel. CF(1) has five subunits: alpha(3), beta(3), gamma(1), delta(1), epsilon(1). CF(0) has three main subunits: a, b and c.

The protein localises to the plastid. It localises to the chloroplast thylakoid membrane. Produces ATP from ADP in the presence of a proton gradient across the membrane. The sequence is that of ATP synthase epsilon chain, chloroplastic from Porphyra purpurea (Red seaweed).